The sequence spans 160 residues: Cytochrome b6-f complex subunit 4 (160 aa).

A run of 3 helical transmembrane segments spans residues 36-56 (LLYIFPVVIFGTIACNVGLAV), 95-115 (LLGVLLMAAVPAGLLTVPFLE), and 131-151 (TVFLFGTVVALWLGIGAALPI).

The protein belongs to the cytochrome b family. PetD subfamily. The 4 large subunits of the cytochrome b6-f complex are cytochrome b6, subunit IV (17 kDa polypeptide, petD), cytochrome f and the Rieske protein, while the 4 small subunits are petG, petL, petM and petN. The complex functions as a dimer.

The protein resides in the plastid. Its subcellular location is the chloroplast thylakoid membrane. Its function is as follows. Component of the cytochrome b6-f complex, which mediates electron transfer between photosystem II (PSII) and photosystem I (PSI), cyclic electron flow around PSI, and state transitions. The sequence is that of Cytochrome b6-f complex subunit 4 from Spirogyra maxima (Green alga).